Here is a 278-residue protein sequence, read N- to C-terminus: 4-hydroxy-tetrahydrodipicolinate reductase (278 aa).

NAD(+) is bound by residues 13–18 (GAAGKM) and 111–113 (GTT). The active-site Proton donor/acceptor is the His167. Residue His168 coordinates (S)-2,3,4,5-tetrahydrodipicolinate. Residue Lys171 is the Proton donor of the active site. A (S)-2,3,4,5-tetrahydrodipicolinate-binding site is contributed by 177–178 (GT).

Belongs to the DapB family.

Its subcellular location is the cytoplasm. The catalysed reaction is (S)-2,3,4,5-tetrahydrodipicolinate + NAD(+) + H2O = (2S,4S)-4-hydroxy-2,3,4,5-tetrahydrodipicolinate + NADH + H(+). It catalyses the reaction (S)-2,3,4,5-tetrahydrodipicolinate + NADP(+) + H2O = (2S,4S)-4-hydroxy-2,3,4,5-tetrahydrodipicolinate + NADPH + H(+). The protein operates within amino-acid biosynthesis; L-lysine biosynthesis via DAP pathway; (S)-tetrahydrodipicolinate from L-aspartate: step 4/4. Functionally, catalyzes the conversion of 4-hydroxy-tetrahydrodipicolinate (HTPA) to tetrahydrodipicolinate. This is 4-hydroxy-tetrahydrodipicolinate reductase from Nostoc punctiforme (strain ATCC 29133 / PCC 73102).